The sequence spans 43 residues: Potassium channel toxin gamma-KTx 4.6 (43 aa).

4 disulfides stabilise this stretch: cysteine 5–cysteine 23, cysteine 11–cysteine 34, cysteine 20–cysteine 39, and cysteine 24–cysteine 41.

The protein belongs to the ergtoxin family. Gamma-KTx 4 subfamily. As to expression, expressed by the venom gland.

Its subcellular location is the secreted. Reversibly blocks Kv11/ERG potassium channels. The chain is Potassium channel toxin gamma-KTx 4.6 from Centruroides limpidus (Mexican scorpion).